Consider the following 1159-residue polypeptide: RAD51-associated protein 2 (1159 aa).

The tract at residues 1–35 (MSLPQPTPRMAELRKPTSSLTPPEDPDSQPPSSKR) is disordered. Residues 1111-1159 (SHFPHGISRVRPLKTCSRPIRIGLSRKARIKQLHPYLKQMCYGNLKENF) form an interaction with RAD51 region.

Interacts with RAD51. As to expression, specifically expressed in meiotic tissues. Highly expressed in testis.

The polypeptide is RAD51-associated protein 2 (RAD51AP2) (Homo sapiens (Human)).